Here is a 127-residue protein sequence, read N- to C-terminus: MAIVGLGTDIVEIERIQAHVARAGDKLAKRVLTEAELAIYTGHSQPSRYLAKRFAAKEAAAKALGTGIGRGVSFQHIHIGNNEDGAPTIHFTEGALARLQQLKATVGHISIADEKSYAIATVIIESQ.

Residues Asp9 and Glu58 each contribute to the Mg(2+) site.

The protein belongs to the P-Pant transferase superfamily. AcpS family. Mg(2+) serves as cofactor.

It is found in the cytoplasm. The catalysed reaction is apo-[ACP] + CoA = holo-[ACP] + adenosine 3',5'-bisphosphate + H(+). In terms of biological role, transfers the 4'-phosphopantetheine moiety from coenzyme A to a Ser of acyl-carrier-protein. The sequence is that of Holo-[acyl-carrier-protein] synthase from Shewanella baltica (strain OS223).